A 468-amino-acid polypeptide reads, in one-letter code: 3-isopropylmalate dehydratase large subunit (468 aa).

Cysteine 349, cysteine 409, and cysteine 412 together coordinate [4Fe-4S] cluster.

Belongs to the aconitase/IPM isomerase family. LeuC type 1 subfamily. In terms of assembly, heterodimer of LeuC and LeuD. The cofactor is [4Fe-4S] cluster.

It carries out the reaction (2R,3S)-3-isopropylmalate = (2S)-2-isopropylmalate. The protein operates within amino-acid biosynthesis; L-leucine biosynthesis; L-leucine from 3-methyl-2-oxobutanoate: step 2/4. Catalyzes the isomerization between 2-isopropylmalate and 3-isopropylmalate, via the formation of 2-isopropylmaleate. This chain is 3-isopropylmalate dehydratase large subunit, found in Shewanella baltica (strain OS223).